A 173-amino-acid polypeptide reads, in one-letter code: Probable calcium-binding protein CML14 (173 aa).

4 consecutive EF-hand domains span residues 21-56, 57-92, 97-132, and 133-168; these read SQLK…LGLR, PTGD…VLTT, VDQA…LGQP, and LTFE…SALD. Residues Asp34, Asn36, Asp38, Ser40, Glu45, Asp70, Asn72, Asn74, Ser76, Glu81, Asp110, Asp112, Asn114, Glu121, Asp146, Asp148, Asp150, and Glu157 each coordinate Ca(2+).

In terms of biological role, potential calcium sensor. The protein is Probable calcium-binding protein CML14 (CML14) of Oryza sativa subsp. japonica (Rice).